An 820-amino-acid polypeptide reads, in one-letter code: G-type lectin S-receptor-like serine/threonine-protein kinase At1g11300 (820 aa).

A signal peptide spans 1-26; the sequence is MRLHESSSPFVCILVLSCFFLSVSLA. The Bulb-type lectin domain maps to 27–150; it reads QERAFFSGKL…SSDAYLWESF (124 aa). The Extracellular portion of the chain corresponds to 27-436; sequence QERAFFSGKL…SEIKTKDKRP (410 aa). Residues N37, N58, N87, N115, N123, N173, N211, N247, N256, and N282 are each glycosylated (N-linked (GlcNAc...) asparagine). The region spanning 290-326 is the EGF-like; atypical domain; it reads PATECDNYRRCGEFATCNPRKNPLCSCIRGFRPRNLI. Intrachain disulfides connect C294–C306 and C300–C314. Residues N332 and N351 are each glycosylated (N-linked (GlcNAc...) asparagine). In terms of domain architecture, PAN spans 345 to 425; the sequence is CERQNNNGSA…SGLDLYIRLA (81 aa). Disulfide bonds link C379/C400 and C383/C389. A glycan (N-linked (GlcNAc...) asparagine) is linked at N404. A helical transmembrane segment spans residues 437-457; the sequence is ILIGTILAGGIFVVAACVLLA. Residues 458–820 are Cytoplasmic-facing; it reads RRIVMKKRAK…NVTITDVTGR (363 aa). The region spanning 509–788 is the Protein kinase domain; it reads FSLRNKLGQG…DIPEPKQPAF (280 aa). Residues 515 to 523 and K537 contribute to the ATP site; that span reads LGQGGFGPV. The tract at residues 598-615 is caM-binding; that stretch reads RRAKLLDWKTRFNIINGI. D634 serves as the catalytic Proton acceptor.

The protein belongs to the protein kinase superfamily. Ser/Thr protein kinase family.

The protein resides in the cell membrane. It catalyses the reaction L-seryl-[protein] + ATP = O-phospho-L-seryl-[protein] + ADP + H(+). It carries out the reaction L-threonyl-[protein] + ATP = O-phospho-L-threonyl-[protein] + ADP + H(+). This Arabidopsis thaliana (Mouse-ear cress) protein is G-type lectin S-receptor-like serine/threonine-protein kinase At1g11300.